The sequence spans 134 residues: Arsenate reductase (134 aa).

Residues Cys-11, Cys-83, and Cys-90 each act as nucleophile in the active site. 2 disulfide bridges follow: Cys-11–Cys-83 and Cys-83–Cys-90.

The protein belongs to the low molecular weight phosphotyrosine protein phosphatase family. Thioredoxin-coupled ArsC subfamily.

Its subcellular location is the cytoplasm. It carries out the reaction arsenate + [thioredoxin]-dithiol + H(+) = arsenite + [thioredoxin]-disulfide + H2O. Functionally, catalyzes the reduction of arsenate [As(V)] to arsenite [As(III)]. In Bacillus cereus (strain ZK / E33L), this protein is Arsenate reductase.